We begin with the raw amino-acid sequence, 32 residues long: Yop proteins translocation protein A (32 aa).

The protein is Yop proteins translocation protein A (yscA) of Yersinia pestis.